Consider the following 90-residue polypeptide: Probable Fe(2+)-trafficking protein (90 aa).

This sequence belongs to the Fe(2+)-trafficking protein family.

In terms of biological role, could be a mediator in iron transactions between iron acquisition and iron-requiring processes, such as synthesis and/or repair of Fe-S clusters in biosynthetic enzymes. This is Probable Fe(2+)-trafficking protein from Delftia acidovorans (strain DSM 14801 / SPH-1).